Consider the following 3601-residue polypeptide: MKWATLLKDIKEKVGLAQSSDSDPFPVDLTAPPSSSSSSSSPSFTYPSSSSLHHFNFSPSSRDNHELELDFKRLWEEFRSSSSEKEKEAALNLTVDIFCRLVKRHANVDQLVTMLVETHIFSFVIGRAFVTDIEKLKIGSKTRSLNVEKVLRFFSDVTKEGFSPGANLLTAVEVLVSGPIDKQSLLDSGIFCCLIHVLIALLAYDELSKSKITGDLEVVSAEKDAGYIVLQTRRLEVEGSVVHIMKALASNPSAAQSLIEDDSLESLFNMVANGSITVFSQYKEGLVPLHNIQLHRHAMQILGLLLVNDNGSTARYIRKHHLIKVLLMAVKEFDPSCGDSAYTMGIVDLLLECVELSYRPEAGGVRLREDIRNAHGYHFLVQFALVLSSLPKNPIFVSSNHDSGSDDPEVFHDGENTNSTENADFSSQNFAPSLSRLLDVLVTLAQTGPAEPSVGRASRSSQTKPTGHSRSRTSSVDSIYDETWEQGSGKVKDLEAVQMLQDIFLKAENKDLQAEVLNRMFKIFSSHVENYRLCQELRTVPLLVLNMAGFPSSLQDIILKILEYAVTVVNCVPEQELLSLCCLLQQPITSQLKHTILSFFVKLISFDQQYKKVLREVGVLEVLQDDLKQHKLLIGPDQYSGVSSHSDRKPSSGSFRKNLDTKDAIISSPKLMESGSGKLPVFEVDNTITVGWDCLISLLKKAEANQSSFRAANGVAIILPFLISDAHRSGVLRILSCLITEDTKQVHHDELGAVVDLLKSGMVTGISGHQYKLHDDAKCDTMGALWRIVGVNGSAQRVFGEATGFSLLLTTLHTFQGKREHMDESDLTVYIKLFKYLFRLMTAAVCENAVNRMKLHAVITSQTFFELLAESGLLCVELERQVIQLLLELALEVVVPPFLTSESTALATIPENENTTFVVTTPSGQFNPDKERIYNAGAVRVLIRSLLLFSPKMQLEFLRLLESLARASPFNQENLTSIGCVELLLEIIYPFLAGSSPFLSYALKIVEILGAYRLSPSELRMLFRYVLQMRIMNSGHAIVGMMEKLILMEDTALEHLSLAPFVELDMSKTGHASVQVSLGERSWPPAAGYSFVCWFQFRNFLTTQGKESEASKAGGSSKTRMTSAQQHEQNIFRMFSVGAVSNESPFYAELYFQEDGILTLATSNSHSLSFSGLEIEEGRWHHLAVVHSKPNALAGLFQASVAYVYLDGKLRHTGKLGYSPSPVGKSLQVTVGTPATCARVSDLTWKTRSCYLFEEVLTSGCIGFMYILGRGYKGLFQDADLLRFVPNQACGGGSMAILDSLDTDMTSSSNGQKFDGSNRQGDSKADGSGIVWDLERLGNLAFQLPGKKLIFAFDGTCSEFIRASGNFSLLNLVDPLSAAASPIGGIPRFGRLVGNVSICRQSVIGDTIRPVGGMTVVLALVEAAESRNMLHMALSLLACALHQNPQNVKDMQTIRGYHLLALFLRPKMTLFDMQSLEIFFQIAACEALFSEPKKLESVQSNITMPPTETIFENSYEDLSLSRFRYDSSSVGSHGDMDDFSVPKDSFSHLSELETDIPVETSNCIVLSNADMVEHVLLDWTLWVTSPVSIQIALLGFLENLVSMHWYRNHNLTILRRINLVEHLLVTLQRGDVEVPVLEKLVVLLGCILEDGFLTSELENVVRFVIMTFNPPEVKSRSSLLRESMGKHVIVRNMLLEMLIDLQVTIKAEDLLELWHKIVSSKLITYFLDEAVHPTSMRWIMTLLGVCLASSPNFSLKFRTSGGYQGLLRVLQNFYDSPDIYYILFCLIFGKPVYPRLPEVRMLDFHALVPNDGSYVELKFIELLDSVVAMAKSTYDRLIMQSMLAHQSGNLSQVSASLVAELIEGAEMTGELQGEALMHKTYAARLMGGEASAPAAATSVLRFMVDLAKMCPQFSTACRRAEFVENCADLYFSCVRAAYAVKMAKQLSVKAEEKHINDADDSGSQGSLPHDQDQSTKTSISVGSFPQGQVSLGSEDMSLPANYVVNDKMENILPPPTQDTSKSLQGVEDVKKQDDHHVGPSASSERDFQDFTGNPVQVQATDSQSSASFPMIESPLLSEKSSLKVSFTPSPSPVVALASWLGSNYNESKSSTLGSPSLESYVSVNEVDASSERKSGSQGSSAANAFFTVSPKLLLETDETGYGGGPCSAGASAVLDFMAEALADLVTEQIKAVPVLESILEMVPFYVDPESVLVFQGLCLSRVMNYLERRLLRDDEEDEKKLDKAKWSVNLDAFCWMIVDRVYMGAFSQPAGVLRALEFLLSMLQLANKDGRVEEVTPSGKGLLSLGRATRQLDAYVHSILKNTNRMVLYCFLPSFLITIGEEDLLSQLGLLVESKKRPSPNPATDESGIDISTVLQLLVANRRIIFCPSNLDTDLNCCLCVNLISLLLDQRKSVQNMSLDIVKYLLVHRRSALEDLLVTKPNQGQNFDVLHGGFDKLLTGNLPEFFKWLESSDKIINKVLEQCAAIMWVQYIAGSAKFPGVRIKGMEGRRKREMGRKSRDMSKLDLKHWDQLNERRYALEVLRDAMSTELRVVRQNKYGWILHAESEWQTHLQQLVHERGIFPMRKSKGTEDPEWQLCPIEGPYRMRKKLERCKLKIDSIQNVLDGKLELGEIELPKVKNEDGPVISDTDSEPPFLLSELYDESFLKESDDFKDVASARNGWNDDRASSTNEASLHSALDFGGKSSIASVPITDTTHVKSETGSPRHSSSAKMDETNGREEKSEKELNDDGEYLIRPYLEHLEKIRFRYNCERVVDLDKHDGIFLIGEFCLYVIENFYIDEDGCICEKECEDELSVIDQALGVKKDVSGSSDFHSKSSTSWTTTVKTGAVGGRAWAYGGGAWGKEKMCMTGNLPHPWRMWKLNNVHEILKRDYQLRPVAIEIFSMDGCNDLLVFHKKEREEVFKNLVAMNLPRNSMLDTTISGSAKQESNEGGRLFKLMAKSFSKRWQNGEISNFQYLMHLNTLAGRGYSDLTQYPVFPWVLADYDSESLDFSDPKTFRKLHKPMGCQTPEGEEEFRKRYESWDDPEVPKFHYGSHYSSAGIVLFYLIRLPPFSSENQKLQGGQFDHADRLFNSIKDTWLSAAGKGNTSDVKELIPEFFYMPEFLENRFSLDLGEKQSGEKVGDVFLPPWARGSVREFILKHREALESDYVSENLHHWIDLIFGYKQRGKAAEEAVNVFYHYTYEGNVDIDAVTDPAMKASILAQINHFGQTPKQLFPKAHVKRRTDRKIPLHPLKHSMHLVPHEIRKCSSSISQIITFHDKVLVAGANCFLKPRGYTKYITWGFPDRSLRFMSYDQDKLLSTHENLHESNQIQCAGVSHDGRIVVTGAEDGLVCVWRVSKDGPRGSRRLRLEKALCAHTAKVTCLRVSQPYMMIASGSDDCTVIIWDLSSLSFVRQLPDFPVPISAIYINDLTGEIVTAAGTVLAVWSINGDCLAVANTSQLPSDSVLSVTGSTSSDWLETSWYVTGHQSGAVKVWRMIHCTDPVSAESKTSSSNRTGGLNLGDQVPEYKLILHKVLKFHKQPVTALHLTSDLKQLLSGDSAGQLLSWTVPDETLRASMKQASLKQASLKQASLKQASSV.

Disordered regions lie at residues 17-50, 398-426, 449-476, 638-657, 1954-1993, 2009-2049, and 2715-2747; these read AQSSDSDPFPVDLTAPPSSSSSSSSPSFTYPSSS, SSNHDSGSDDPEVFHDGENTNSTENADFS, PAEPSVGRASRSSQTKPTGHSRSRTSSV, QYSGVSSHSDRKPSSGSFRK, HINDADDSGSQGSLPHDQDQSTKTSISVGSFPQGQVSLGS, ENIL…DFQD, and TTHVKSETGSPRHSSSAKMDETNGREEKSEKEL. The span at 32 to 50 shows a compositional bias: low complexity; it reads PPSSSSSSSSPSFTYPSSS. Composition is skewed to polar residues over residues 416 to 426 and 458 to 476; these read NTNSTENADFS and SRSSQTKPTGHSRSRTSSV. Positions 1974-1991 are enriched in polar residues; that stretch reads STKTSISVGSFPQGQVSL. Residues 2027–2048 are compositionally biased toward basic and acidic residues; sequence EDVKKQDDHHVGPSASSERDFQ. Over residues 2715 to 2731 the composition is skewed to polar residues; sequence TTHVKSETGSPRHSSSA. Over residues 2732–2747 the composition is skewed to basic and acidic residues; that stretch reads KMDETNGREEKSEKEL. Residues 2760–2927 enclose the BEACH-type PH domain; that stretch reads EHLEKIRFRY…EREEVFKNLV (168 aa). Residues 2952 to 3244 enclose the BEACH domain; that stretch reads GGRLFKLMAK…QLFPKAHVKR (293 aa). WD repeat units lie at residues 3328 to 3367, 3378 to 3417, 3464 to 3507, and 3540 to 3579; these read HESNQIQCAGVSHDGRIVVTGAEDGLVCVWRVSKDGPRGS, AHTAKVTCLRVSQPYMMIASGSDDCTVIIWDLSSLSFVRQ, PSDS…DPVS, and FHKQPVTALHLTSDLKQLLSGDSAGQLLSWTVPDETLRAS.

In terms of assembly, interacts with DCP1. In terms of tissue distribution, expressed in flowers, leaves, stems, hypocotyls and roots.

The protein localises to the cytoplasm. The protein resides in the P-body. Functionally, involved in cell morphogenesis. May have a function in membrane fusion or membrane composition. Required for salt stress tolerance. Regulates the salt stress-dependent post-transcriptional stabilization, cytoplasmic agglomeration, and localization to P-bodies of a subset of salt stress-regulated mRNAs. This Arabidopsis thaliana (Mouse-ear cress) protein is Protein SPIRRIG.